The primary structure comprises 595 residues: D-xylonate dehydratase (595 aa).

A [2Fe-2S] cluster-binding site is contributed by Cys-64. Residue Glu-96 coordinates Mg(2+). Cys-132 lines the [2Fe-2S] cluster pocket. A Mg(2+)-binding site is contributed by Asp-133. Cys-205 lines the [2Fe-2S] cluster pocket. Glu-467 is a Mg(2+) binding site.

It belongs to the IlvD/Edd family. As to quaternary structure, homotetramer. Requires [2Fe-2S] cluster as cofactor. Mg(2+) is required as a cofactor.

It carries out the reaction D-xylonate = 2-dehydro-3-deoxy-D-arabinonate + H2O. The catalysed reaction is D-gluconate = 2-dehydro-3-deoxy-D-gluconate + H2O. It functions in the pathway carbohydrate metabolism; D-xylose degradation. Its function is as follows. Catalyzes the dehydration of D-xylonate to 2-dehydro-3-deoxy-D-arabinonate during D-xylose degradation. Can also dehydrate D-gluconate, with similar catalytic efficiency. Has weak activity with D-galactonate, D-fuconate and L-arabinonate. The chain is D-xylonate dehydratase from Caulobacter vibrioides (strain ATCC 19089 / CIP 103742 / CB 15) (Caulobacter crescentus).